We begin with the raw amino-acid sequence, 436 residues long: Probable transporter MCH1 (436 aa).

7 helical membrane passes run V27–T47, M66–A86, L93–V113, S119–F139, L155–L175, L188–V208, and F249–I269. N-linked (GlcNAc...) asparagine glycosylation is present at N278. Helical transmembrane passes span V295–L312, L325–L345, G347–I367, T373–G393, and T410–A430.

Belongs to the major facilitator superfamily.

It is found in the vacuole membrane. Probable transporter. The chain is Probable transporter MCH1 (MCH1) from Candida albicans (strain SC5314 / ATCC MYA-2876) (Yeast).